Reading from the N-terminus, the 178-residue chain is Platelet inhibitor triplatin-2 (178 aa).

An N-terminal signal peptide occupies residues 1–18; the sequence is MKMIISLTFLGILMLAFA. 3 cysteine pairs are disulfide-bonded: cysteine 25-cysteine 134, cysteine 60-cysteine 178, and cysteine 90-cysteine 106.

The protein belongs to the calycin superfamily. Triabin family. In terms of tissue distribution, expressed in salivary glands.

It localises to the secreted. Inhibits platelet aggregation and vasoconstriction through binding to distinct eicosanoids involved in inflammation (acts as a scavenger), and has a role in inhibiting host innate immunity by impairing platelet-assisted formation of neutrophil extracellular traps (NETs). Inhibits platelet aggregation by collagen, and low doses of thromboxane A2 mimetic (TXA2 mimetic), and arachidonic acid (AA) without affecting aggregation induced by ADP, convulxin (GP6 agonist), and PMA. Binds to TXA2, TXB2, prostaglandine H2 mimetic (PGH2 mimetic), PGJ2, and PGF2alpha. Binding is not observed to leukotrienes, AA, and biogenic amines (PGE1, 5(S)-HETE, 12(S)-HETE, 20-HETE, norepinephrine, epinephrine, serotonin, LTC4 and ADP). Induces relaxation of aorta rat previously contracted with TXA2 mimetic. Moreover, it also impairs platelet-assisted formation of neutrophil extracellular traps (NETs). NETs are web-like structures of DNA and proteins that play an important role in killing of pathogens. In addition, NETs are implicated in thrombus formation. In vivo, this protein exhibits antithrombotic activity in two distinct mice models that are highly dependent on platelets. It is noteworthy that it inhibits thrombosis without promoting excessive bleeding. The chain is Platelet inhibitor triplatin-2 from Triatoma infestans (Assassin bug).